A 227-amino-acid polypeptide reads, in one-letter code: tRNA (guanine-N(1)-)-methyltransferase (227 aa).

S-adenosyl-L-methionine is bound by residues glycine 110 and 129–134 (IGDYVL).

Belongs to the RNA methyltransferase TrmD family. In terms of assembly, homodimer.

The protein localises to the cytoplasm. It carries out the reaction guanosine(37) in tRNA + S-adenosyl-L-methionine = N(1)-methylguanosine(37) in tRNA + S-adenosyl-L-homocysteine + H(+). In terms of biological role, specifically methylates guanosine-37 in various tRNAs. The protein is tRNA (guanine-N(1)-)-methyltransferase of Mycoplasmopsis agalactiae (strain NCTC 10123 / CIP 59.7 / PG2) (Mycoplasma agalactiae).